We begin with the raw amino-acid sequence, 433 residues long: GTPase Obg (433 aa).

The Obg domain occupies 1-159; the sequence is MAITDYCECR…LNVSLEVKYL (159 aa). The 170-residue stretch at 160–329 folds into the OBG-type G domain; it reads ANVGIVGFPN…LLDRVFELYN (170 aa). GTP contacts are provided by residues 166–173, 191–195, 212–215, 282–285, and 310–312; these read GFPNSGKS, FTTLI, DIPG, NKID, and ISA. Mg(2+) contacts are provided by Ser173 and Thr193. One can recognise an OCT domain in the interval 355-433; sequence TNENNNDPLN…FDGCEFVIND (79 aa).

The protein belongs to the TRAFAC class OBG-HflX-like GTPase superfamily. OBG GTPase family. Monomer. Requires Mg(2+) as cofactor.

The protein resides in the cytoplasm. Functionally, an essential GTPase which binds GTP, GDP and possibly (p)ppGpp with moderate affinity, with high nucleotide exchange rates and a fairly low GTP hydrolysis rate. Plays a role in control of the cell cycle, stress response, ribosome biogenesis and in those bacteria that undergo differentiation, in morphogenesis control. This Mycoplasma genitalium (strain ATCC 33530 / DSM 19775 / NCTC 10195 / G37) (Mycoplasmoides genitalium) protein is GTPase Obg.